The sequence spans 372 residues: Pre-small/secreted glycoprotein (372 aa).

Positions 1-32 (MEGLSLLQLPRDKFRKSSFFVWVIILFQKAFS) are cleaved as a signal peptide. The N-linked (GlcNAc...) asparagine; by host glycan is linked to asparagine 40. 2 disulfides stabilise this stretch: cysteine 108/cysteine 135 and cysteine 121/cysteine 147. N-linked (GlcNAc...) asparagine; by host glycans are attached at residues asparagine 204, asparagine 208, asparagine 238, asparagine 257, and asparagine 268. The disordered stretch occupies residues 320-340 (MRHRRELQREESPTGPPGSIR).

It belongs to the filoviruses glycoprotein family. Homodimer; disulfide-linked. The homodimers are linked by two disulfide bonds in a parallel orientation. As to quaternary structure, monomer. In terms of processing, this precursor is processed into mature sGP and delta-peptide by host furin or furin-like proteases. The cleavage site corresponds to the furin optimal cleavage sequence [KR]-X-[KR]-R. Post-translationally, N-glycosylated. O-glycosylated.

Its subcellular location is the secreted. Seems to possess an anti-inflammatory activity as it can reverse the barrier-decreasing effects of TNF alpha. Might therefore contribute to the lack of inflammatory reaction seen during infection in spite the of extensive necrosis and massive virus production. Does not seem to be involved in activation of primary macrophages. Does not seem to interact specifically with neutrophils. Its function is as follows. Viroporin that permeabilizes mammalian cell plasma membranes. It acts by altering permeation of ionic compounds and small molecules. This activity may lead to viral enterotoxic activity. The sequence is that of Pre-small/secreted glycoprotein (GP) from Sudan ebolavirus (strain Boniface-76) (SEBOV).